The sequence spans 86 residues: UPF0512 protein V (86 aa).

It belongs to the UPF0512 family.

This chain is UPF0512 protein V, found in Dictyostelium discoideum (Social amoeba).